We begin with the raw amino-acid sequence, 1482 residues long: MIERGKFRSLTLVNWNGFFARTFDLDELVTTLSGGNGAGKSTTMAAFVTALIPDLTLLHFRNTTEAGATSGSRDKGLHGKLRAGVCYSTLDVINSRHQRVVVGVRLQQVAGRDRKVDIKPFMIQGLPTAMQPTQLLTENVGERQARVLPLNELKDRLDEMEGVQFKQFNSITDYHALMFDLGVIPKRLRSASDRSKFYRLIEASLYGGISSAITRSLRDYLLPENSGVRKAFQDMEAALRENRITLEAIRVTQSDRDLFKHLITEATAYVSADYMRHANERRTYLDQALALRGELFGSHRQLATERYRHVEMARELEEQSGASVDLEADHQAASDHLNLVQTAMRQQEKIDRYQGDLEELSYRLEEQTEVVEEAAELQAEYEARAEAAEQEVDELKSQLADYQQALDVQQTRAIQYQQALQALERARELCRLPDLAADNAEAWLETFQAKEQQATESLLTLEQKLSVADAAHSQFERAYQLVKNMVGEISRSEAWQSARELLRDWPSQQHLADRVQPLRMRLAELEQRLTNQQNAEFLLNEFCKRQGQQYQAEDLEGLQSELEARQEALSLSVNESGERRMEMRQALEQLKQKIQSLTARAPVWLAAQDTLSQLCEQNGEALASSNDVTEYMQQLLEREREATVERDEVAAQKRELEKQIERLSQPSGAEDSRMIALAERFGGVLLSEIYDDITIDDAPYFSALYGPARHGIVVPDLSLVRSHLETLEDCPEDLYLIEGDPQSFDDSVFNAEEQANAVLVKSSDRQWRYSRYPELPLFGRAARENRLEALNLERDTLAERYATLSFDVQKIQRAHQAFSQFVGKHLSVAFDTDPEAEIRELRQRHTELERELSRFEEQTQQQRQQYTQAKESLTTLNRLIPQVTLLLDETLIDRVEEIREELDEAQEAARFLQQHGSALAKLEPMVAVLQSDPQQHEQLQQDYETAKQSQHQAKQQAFALVEVVQRRAHFSYSDSAGMLSENADLNDKLRQRLEHAESDRSRAREQLRQQQAQYSQFNQVLASLKSSYETKQDMLKELHQEMKEIGVRADANAEMRARERRDQLHEALSANRSRVNQLEKQIAFCEAEMDSLQKKLRKLERDYYQIREQVVSAKAGWCAVMRMVKDNGVERRLHRRELAYMEGGALRSMSDKALGALRLAVSDNEHLRDALRLSEDPKRPERKIQFFIAVYQHLRERIRQDIIRTDDPVDAIEQMEIELARLTEELTAREQKLAISSKSVANIIRKTIQREQNRIRMLNQGLQAVSFGQVRGVRLNVNVRESHALLLDVLSEQQEQHQDLFNSQRLTFSEAMAKLYQRLNPQVDMGQRLPQTIGEELLDYRNYLELDVEVNRGSDGWLKAESGALSTGEAIGTGMSILVMVVQSWEEESRRLRGKDISPCRLLFLDEAARLDAKSIATLFELCERLQMQLIIAAPENISPEKGTTYKLVRKVFKNHEHVHVVGLRGFGQDVPATQLISDATA.

Residue 34–41 (GGNGAGKS) coordinates ATP. A coiled-coil region spans residues 333-665 (ASDHLNLVQT…LEKQIERLSQ (333 aa)). Positions 666–783 (PSGAEDSRMI…ELPLFGRAAR (118 aa)) are flexible hinge. Coiled-coil stretches lie at residues 784–1116 (ENRL…AKAG) and 1209–1260 (VDAI…MLNQ).

Belongs to the SMC family. MukB subfamily. In terms of assembly, homodimerization via its hinge domain. Binds to DNA via its C-terminal region. Interacts, and probably forms a ternary complex, with MukE and MukF via its C-terminal region. The complex formation is stimulated by calcium or magnesium. Interacts with tubulin-related protein FtsZ.

It localises to the cytoplasm. The protein resides in the nucleoid. Plays a central role in chromosome condensation, segregation and cell cycle progression. Functions as a homodimer, which is essential for chromosome partition. Involved in negative DNA supercoiling in vivo, and by this means organize and compact chromosomes. May achieve or facilitate chromosome segregation by condensation DNA from both sides of a centrally located replisome during cell division. The sequence is that of Chromosome partition protein MukB from Photorhabdus laumondii subsp. laumondii (strain DSM 15139 / CIP 105565 / TT01) (Photorhabdus luminescens subsp. laumondii).